The chain runs to 101 residues: UPF0235 protein MmarC5_0538 (101 aa).

Belongs to the UPF0235 family.

The polypeptide is UPF0235 protein MmarC5_0538 (Methanococcus maripaludis (strain C5 / ATCC BAA-1333)).